Reading from the N-terminus, the 206-residue chain is Bis(5'-adenosyl)-triphosphatase (206 aa).

The HIT domain maps to 3–115; sequence KPIYFSKFLV…KINNVGDLIY (113 aa). A Histidine triad motif motif is present at residues 96–100; sequence HLHTH. H98 serves as the catalytic Tele-AMP-histidine intermediate. The tract at residues 143–164 is disordered; it reads RQARKNNSTSATVDGDELSQGP.

In terms of assembly, homodimer. Mn(2+) is required as a cofactor.

The protein resides in the cytoplasm. It is found in the nucleus. It localises to the mitochondrion. The enzyme catalyses P(1),P(3)-bis(5'-adenosyl) triphosphate + H2O = AMP + ADP + 2 H(+). Cleaves A-5'-PPP-5'A to yield AMP and ADP. Can cleave all dinucleoside polyphosphates, provided the phosphate chain contains at least 3 phosphates and that 1 of the 2 bases composing the nucleotide is a purine. Is most effective on dinucleoside triphosphates. Negatively regulates intracellular dinucleoside polyphosphate levels, which elevate following heat shock. This Saccharomyces cerevisiae (strain RM11-1a) (Baker's yeast) protein is Bis(5'-adenosyl)-triphosphatase (HNT2).